A 475-amino-acid chain; its full sequence is Ribulose bisphosphate carboxylase large chain (475 aa).

A propeptide spanning residues 1 to 2 (MS) is cleaved from the precursor. Residue P3 is modified to N-acetylproline. K14 bears the N6,N6,N6-trimethyllysine mark. Positions 123 and 173 each coordinate substrate. Residue K175 is the Proton acceptor of the active site. K177 serves as a coordination point for substrate. K201, D203, and E204 together coordinate Mg(2+). Position 201 is an N6-carboxylysine (K201). H294 functions as the Proton acceptor in the catalytic mechanism. Residues R295, H327, and S379 each coordinate substrate.

This sequence belongs to the RuBisCO large chain family. Type I subfamily. As to quaternary structure, heterohexadecamer of 8 large chains and 8 small chains; disulfide-linked. The disulfide link is formed within the large subunit homodimers. The cofactor is Mg(2+). In terms of processing, the disulfide bond which can form in the large chain dimeric partners within the hexadecamer appears to be associated with oxidative stress and protein turnover.

Its subcellular location is the plastid. It localises to the chloroplast. The enzyme catalyses 2 (2R)-3-phosphoglycerate + 2 H(+) = D-ribulose 1,5-bisphosphate + CO2 + H2O. It carries out the reaction D-ribulose 1,5-bisphosphate + O2 = 2-phosphoglycolate + (2R)-3-phosphoglycerate + 2 H(+). RuBisCO catalyzes two reactions: the carboxylation of D-ribulose 1,5-bisphosphate, the primary event in carbon dioxide fixation, as well as the oxidative fragmentation of the pentose substrate in the photorespiration process. Both reactions occur simultaneously and in competition at the same active site. In Betula papyrifera (Paper birch), this protein is Ribulose bisphosphate carboxylase large chain.